A 341-amino-acid polypeptide reads, in one-letter code: Ribonucleoside-diphosphate reductase small chain A (341 aa).

Residues 1 to 20 are disordered; that stretch reads MGSLKEGQGRDMEEGESEEP. Fe cation contacts are provided by D87, E118, and H121. Y125 is a catalytic residue. Fe cation-binding residues include E180, E214, and H217.

The protein belongs to the ribonucleoside diphosphate reductase small chain family. In terms of assembly, homodimer and heterodimer with TSO2. Heterotetramer of two R1 and two R2 chains. A radical transfer pathway may occur between Tyr-125 of protein R2 and R1. Homodimer contains a dinuclear non-heme iron center and a stable tyrosyl radical essential for activity. A transfer pathway may occur between Tyr-125 of protein R2 and R1. Interacts with CSN7. Fe cation serves as cofactor. As to expression, expressed in rosette leaves, cauline leaves, stems and flowers.

It is found in the cytoplasm. The enzyme catalyses a 2'-deoxyribonucleoside 5'-diphosphate + [thioredoxin]-disulfide + H2O = a ribonucleoside 5'-diphosphate + [thioredoxin]-dithiol. Inhibited by phenol, paracetamol, 2,4,6-trimethylphenol, resveratrol, furfuryl mercaptan, 2-thiophenthiol, phenylhydrazine, and hydroxyurea. Its function is as follows. Provides the precursors necessary for DNA synthesis. Catalyzes the biosynthesis of deoxyribonucleotides from the corresponding ribonucleotides. The polypeptide is Ribonucleoside-diphosphate reductase small chain A (RNR2A) (Arabidopsis thaliana (Mouse-ear cress)).